A 306-amino-acid polypeptide reads, in one-letter code: UDP-3-O-acyl-N-acetylglucosamine deacetylase (306 aa).

Positions 78, 237, and 241 each coordinate Zn(2+). Residue His-264 is the Proton donor of the active site.

The protein belongs to the LpxC family. The cofactor is Zn(2+).

The catalysed reaction is a UDP-3-O-[(3R)-3-hydroxyacyl]-N-acetyl-alpha-D-glucosamine + H2O = a UDP-3-O-[(3R)-3-hydroxyacyl]-alpha-D-glucosamine + acetate. It functions in the pathway glycolipid biosynthesis; lipid IV(A) biosynthesis; lipid IV(A) from (3R)-3-hydroxytetradecanoyl-[acyl-carrier-protein] and UDP-N-acetyl-alpha-D-glucosamine: step 2/6. Its function is as follows. Catalyzes the hydrolysis of UDP-3-O-myristoyl-N-acetylglucosamine to form UDP-3-O-myristoylglucosamine and acetate, the committed step in lipid A biosynthesis. This Aromatoleum aromaticum (strain DSM 19018 / LMG 30748 / EbN1) (Azoarcus sp. (strain EbN1)) protein is UDP-3-O-acyl-N-acetylglucosamine deacetylase.